An 82-amino-acid chain; its full sequence is Delta-actitoxin-Aeq2b 2 (82 aa).

A signal peptide spans 1 to 19; it reads MNRLMILVFAAVFLALASA. A propeptide spanning residues 20–26 is cleaved from the precursor; that stretch reads DEDVDIA. 3 cysteine pairs are disulfide-bonded: cysteine 32–cysteine 79, cysteine 34–cysteine 69, and cysteine 62–cysteine 80.

It belongs to the sea anemone sodium channel inhibitory toxin family. Type I subfamily.

Its subcellular location is the secreted. The protein resides in the nematocyst. Functionally, binds specifically to voltage-gated sodium channels (Nav), thereby delaying their inactivation during signal transduction. Causes death to crabs. In Actinia equina (Beadlet anemone), this protein is Delta-actitoxin-Aeq2b 2.